A 68-amino-acid chain; its full sequence is Pleurocidin-like peptide WF4 (68 aa).

A signal peptide spans 1-22 (MKFTATFLMMFIFVLMVEPGEC). Positions 48-68 (GEQQDLDKRAVDEDPNVIVFE) are excised as a propeptide.

The protein belongs to the pleurocidin family.

Its subcellular location is the secreted. Its function is as follows. Antimicrobial peptide. This is Pleurocidin-like peptide WF4 (ple4) from Pseudopleuronectes americanus (Winter flounder).